Consider the following 375-residue polypeptide: 23S rRNA (uracil(747)-C(5))-methyltransferase RlmC (375 aa).

Residues cysteine 3, cysteine 11, cysteine 14, and cysteine 87 each coordinate [4Fe-4S] cluster. Residues glutamine 212, phenylalanine 241, glutamate 262, and asparagine 307 each coordinate S-adenosyl-L-methionine. Cysteine 334 functions as the Nucleophile in the catalytic mechanism.

It belongs to the class I-like SAM-binding methyltransferase superfamily. RNA M5U methyltransferase family. RlmC subfamily.

It catalyses the reaction uridine(747) in 23S rRNA + S-adenosyl-L-methionine = 5-methyluridine(747) in 23S rRNA + S-adenosyl-L-homocysteine + H(+). Catalyzes the formation of 5-methyl-uridine at position 747 (m5U747) in 23S rRNA. The polypeptide is 23S rRNA (uracil(747)-C(5))-methyltransferase RlmC (Shigella boydii serotype 4 (strain Sb227)).